A 257-amino-acid chain; its full sequence is tRNA pseudouridine synthase A (257 aa).

The active-site Nucleophile is Asp-43. A substrate-binding site is contributed by Tyr-94.

It belongs to the tRNA pseudouridine synthase TruA family.

It carries out the reaction uridine(38/39/40) in tRNA = pseudouridine(38/39/40) in tRNA. Formation of pseudouridine at positions 38, 39 and 40 in the anticodon stem and loop of transfer RNAs. The protein is tRNA pseudouridine synthase A of Pyrobaculum calidifontis (strain DSM 21063 / JCM 11548 / VA1).